Consider the following 807-residue polypeptide: MSLGQNISRAILQWPVSGLVNHKSLPENPITELKLDPARPIVYALKTSSITDLMTLQQCCEDLGLPGPFTPLELNGQLLPRYVCLDRPPPLFGKRSKPLPFLQEFHQLLDLHKQDPALDIQVVPVTLFWGRAPGREGEEASGWNIISSLAPNRLKKALIVILKGRENLVRFSPPLSLRHMADKHGTDEAIAHKLARVARTHFSRQQLAATGPKLPNRNLLFKQLLDSNVIQQAIEEEAQREGISLEKAQKRAHGYMDEIASDFSYRLIRLGESFLGWLWNKLYRGLSVNGAEKVRQLAQEGHEIVYVPCHRSHMDYLLLSYVIYHQGMVPPHIAAGINLNFWPAGPIFRHGGAFFIRRTFKGNPLYSTVFREYLNLLFAKGYSVEFFTEGGRSRTGRLLPPKTGMLAMTLQAMMRGLDRPVTLVPVYLGYEHVMEVNTYHNELKGSRKEKESFLQVLGILRKLRNYGRGFVNFGEPLTLNNYLNEHVPSWKEHIGEEERPEWMAPTVNQLAELLMTRINGAAAVNGLTLSALALLAAERHALTRDELQAQLNTYLDLLKQVPYSPHSTIPDEDAKTLLDQAMELNKFEVSEDKLGQIVSLDRYQAILLTYYRNNILHLFAMPSLVAALIERCEGISRSEIVARCIDIYPLLKTELFLRYEEDELPELVDALLAELQRQQLIEARDGGFWVNPVNQTRLLLLAESIQETLQRYAIVLTRVLAQPRIEAEQLEADGLMMAERLGTLHGINAPEFFDQKLFSTLIHTLRSEGYLDPGCKPDLGRFQALADNIVPLLSTKIRRTIQAGNRL.

The HXXXXD motif signature appears at 309–314 (CHRSHM).

Belongs to the GPAT/DAPAT family.

Its subcellular location is the cell inner membrane. It carries out the reaction sn-glycerol 3-phosphate + an acyl-CoA = a 1-acyl-sn-glycero-3-phosphate + CoA. Its pathway is phospholipid metabolism; CDP-diacylglycerol biosynthesis; CDP-diacylglycerol from sn-glycerol 3-phosphate: step 1/3. The protein is Glycerol-3-phosphate acyltransferase of Aeromonas hydrophila subsp. hydrophila (strain ATCC 7966 / DSM 30187 / BCRC 13018 / CCUG 14551 / JCM 1027 / KCTC 2358 / NCIMB 9240 / NCTC 8049).